The chain runs to 85 residues: Large ribosomal subunit protein eL43 (85 aa).

The Zn(2+) site is built by cysteine 32, cysteine 35, cysteine 50, and cysteine 53. The segment at 32 to 53 (CTFCGKTKMKRRAVGIWHCGSC) adopts a C4-type zinc-finger fold.

The protein belongs to the eukaryotic ribosomal protein eL43 family. As to quaternary structure, component of the large ribosomal subunit.

It is found in the cytoplasm. Component of the large ribosomal subunit. The ribosome is a large ribonucleoprotein complex responsible for the synthesis of proteins in the cell. The protein is Large ribosomal subunit protein eL43 (rpl37a) of Myxine glutinosa (Atlantic hagfish).